A 305-amino-acid polypeptide reads, in one-letter code: Aspartate carbamoyltransferase catalytic subunit (305 aa).

2 residues coordinate carbamoyl phosphate: Arg-51 and Thr-52. Lys-79 provides a ligand contact to L-aspartate. Carbamoyl phosphate-binding residues include Arg-101, His-129, and Gln-132. Arg-165 and Arg-220 together coordinate L-aspartate. Residues Gly-258 and Pro-259 each contribute to the carbamoyl phosphate site.

Belongs to the aspartate/ornithine carbamoyltransferase superfamily. ATCase family. Heterododecamer (2C3:3R2) of six catalytic PyrB chains organized as two trimers (C3), and six regulatory PyrI chains organized as three dimers (R2).

The enzyme catalyses carbamoyl phosphate + L-aspartate = N-carbamoyl-L-aspartate + phosphate + H(+). It functions in the pathway pyrimidine metabolism; UMP biosynthesis via de novo pathway; (S)-dihydroorotate from bicarbonate: step 2/3. In terms of biological role, catalyzes the condensation of carbamoyl phosphate and aspartate to form carbamoyl aspartate and inorganic phosphate, the committed step in the de novo pyrimidine nucleotide biosynthesis pathway. The chain is Aspartate carbamoyltransferase catalytic subunit from Rubrobacter xylanophilus (strain DSM 9941 / JCM 11954 / NBRC 16129 / PRD-1).